A 98-amino-acid polypeptide reads, in one-letter code: HssA/B-like protein 33 (98 aa).

Disordered stretches follow at residues Met-1–Ser-29 and Ala-60–Cys-98. A compositionally biased stretch (gly residues) spans Ala-60 to Gly-72. Residues Pro-73 to Gly-88 show a composition bias toward basic residues. The span at Gly-89 to Cys-98 shows a compositional bias: gly residues.

This sequence belongs to the hssA/B family.

This Dictyostelium discoideum (Social amoeba) protein is HssA/B-like protein 33 (hssl33).